We begin with the raw amino-acid sequence, 294 residues long: Cytidine deaminase (294 aa).

CMP/dCMP-type deaminase domains follow at residues 48–168 and 186–294; these read DEDA…FGPK and VSGD…VLLG. 89-91 is a binding site for substrate; it reads NME. Position 102 (H102) interacts with Zn(2+). Catalysis depends on E104, which acts as the Proton donor. Zn(2+)-binding residues include C129 and C132.

The protein belongs to the cytidine and deoxycytidylate deaminase family. Homodimer. Zn(2+) serves as cofactor.

The enzyme catalyses cytidine + H2O + H(+) = uridine + NH4(+). It carries out the reaction 2'-deoxycytidine + H2O + H(+) = 2'-deoxyuridine + NH4(+). Functionally, this enzyme scavenges exogenous and endogenous cytidine and 2'-deoxycytidine for UMP synthesis. The polypeptide is Cytidine deaminase (Klebsiella pneumoniae subsp. pneumoniae (strain ATCC 700721 / MGH 78578)).